The following is a 434-amino-acid chain: Histidinol dehydrogenase (434 aa).

Serine 242, glutamine 264, and histidine 267 together coordinate substrate. 2 residues coordinate Zn(2+): glutamine 264 and histidine 267. Residues glutamate 332 and histidine 333 each act as proton acceptor in the active site. Positions 333, 366, 420, and 425 each coordinate substrate. Aspartate 366 provides a ligand contact to Zn(2+). Histidine 425 contacts Zn(2+).

It belongs to the histidinol dehydrogenase family. Zn(2+) is required as a cofactor.

The catalysed reaction is L-histidinol + 2 NAD(+) + H2O = L-histidine + 2 NADH + 3 H(+). The protein operates within amino-acid biosynthesis; L-histidine biosynthesis; L-histidine from 5-phospho-alpha-D-ribose 1-diphosphate: step 9/9. Its function is as follows. Catalyzes the sequential NAD-dependent oxidations of L-histidinol to L-histidinaldehyde and then to L-histidine. In Oleidesulfovibrio alaskensis (strain ATCC BAA-1058 / DSM 17464 / G20) (Desulfovibrio alaskensis), this protein is Histidinol dehydrogenase.